A 269-amino-acid polypeptide reads, in one-letter code: Protein MGF 360-15R (269 aa).

Belongs to the asfivirus MGF 360 family.

Functionally, plays a role in virus cell tropism, and may be required for efficient virus replication in macrophages. This chain is Protein MGF 360-15R, found in African swine fever virus (isolate Pig/Kenya/KEN-50/1950) (ASFV).